The chain runs to 126 residues: uncharacterized protein (126 aa).

A disordered region spans residues M1–S27. Positions D10 to S27 are enriched in acidic residues.

This is an uncharacterized protein from Halorubrum sp. PV6 (HRPV-1).